A 214-amino-acid polypeptide reads, in one-letter code: Phosphatidylserine decarboxylase proenzyme (214 aa).

The active-site Schiff-base intermediate with substrate; via pyruvic acid is Ser-183. Residue Ser-183 is modified to Pyruvic acid (Ser); by autocatalysis.

Belongs to the phosphatidylserine decarboxylase family. PSD-A subfamily. Heterodimer of a large membrane-associated beta subunit and a small pyruvoyl-containing alpha subunit. Requires pyruvate as cofactor. In terms of processing, is synthesized initially as an inactive proenzyme. Formation of the active enzyme involves a self-maturation process in which the active site pyruvoyl group is generated from an internal serine residue via an autocatalytic post-translational modification. Two non-identical subunits are generated from the proenzyme in this reaction, and the pyruvate is formed at the N-terminus of the alpha chain, which is derived from the carboxyl end of the proenzyme. The post-translation cleavage follows an unusual pathway, termed non-hydrolytic serinolysis, in which the side chain hydroxyl group of the serine supplies its oxygen atom to form the C-terminus of the beta chain, while the remainder of the serine residue undergoes an oxidative deamination to produce ammonia and the pyruvoyl prosthetic group on the alpha chain.

The protein resides in the cell membrane. It catalyses the reaction a 1,2-diacyl-sn-glycero-3-phospho-L-serine + H(+) = a 1,2-diacyl-sn-glycero-3-phosphoethanolamine + CO2. It functions in the pathway phospholipid metabolism; phosphatidylethanolamine biosynthesis; phosphatidylethanolamine from CDP-diacylglycerol: step 2/2. In terms of biological role, catalyzes the formation of phosphatidylethanolamine (PtdEtn) from phosphatidylserine (PtdSer). The sequence is that of Phosphatidylserine decarboxylase proenzyme from Syntrophotalea carbinolica (strain DSM 2380 / NBRC 103641 / GraBd1) (Pelobacter carbinolicus).